The chain runs to 218 residues: Deoxyribose-phosphate aldolase (218 aa).

The Proton donor/acceptor role is filled by Asp-92. Lys-156 functions as the Schiff-base intermediate with acetaldehyde in the catalytic mechanism. Residue Lys-185 is the Proton donor/acceptor of the active site.

Belongs to the DeoC/FbaB aldolase family. DeoC type 1 subfamily.

Its subcellular location is the cytoplasm. It carries out the reaction 2-deoxy-D-ribose 5-phosphate = D-glyceraldehyde 3-phosphate + acetaldehyde. The protein operates within carbohydrate degradation; 2-deoxy-D-ribose 1-phosphate degradation; D-glyceraldehyde 3-phosphate and acetaldehyde from 2-deoxy-alpha-D-ribose 1-phosphate: step 2/2. Its function is as follows. Catalyzes a reversible aldol reaction between acetaldehyde and D-glyceraldehyde 3-phosphate to generate 2-deoxy-D-ribose 5-phosphate. The polypeptide is Deoxyribose-phosphate aldolase (Desulfitobacterium hafniense (strain DSM 10664 / DCB-2)).